Here is a 297-residue protein sequence, read N- to C-terminus: ATP synthase subunit gamma, mitochondrial (297 aa).

Belongs to the ATPase gamma chain family. As to quaternary structure, F-type ATPases have 2 components, CF(1) - the catalytic core - and CF(0) - the membrane proton channel. CF(1) has five subunits: alpha(3), beta(3), gamma(1), delta(1), epsilon(1). CF(0) has three main subunits: a, b and c.

It is found in the mitochondrion. It localises to the mitochondrion inner membrane. In terms of biological role, mitochondrial membrane ATP synthase (F(1)F(0) ATP synthase or Complex V) produces ATP from ADP in the presence of a proton gradient across the membrane which is generated by electron transport complexes of the respiratory chain. F-type ATPases consist of two structural domains, F(1) - containing the extramembraneous catalytic core, and F(0) - containing the membrane proton channel, linked together by a central stalk and a peripheral stalk. During catalysis, ATP synthesis in the catalytic domain of F(1) is coupled via a rotary mechanism of the central stalk subunits to proton translocation. Part of the complex F(1) domain and the central stalk which is part of the complex rotary element. The gamma subunit protrudes into the catalytic domain formed of alpha(3)beta(3). Rotation of the central stalk against the surrounding alpha(3)beta(3) subunits leads to hydrolysis of ATP in three separate catalytic sites on the beta subunits. This is ATP synthase subunit gamma, mitochondrial from Drosophila melanogaster (Fruit fly).